The sequence spans 237 residues: Putative biotin ligase (237 aa).

The 191-residue stretch at 1–191 (MEIIHLSEID…KKYKKYSITI (191 aa)) folds into the BPL/LPL catalytic domain.

Belongs to the biotin--protein ligase family.

The enzyme catalyses biotin + L-lysyl-[protein] + ATP = N(6)-biotinyl-L-lysyl-[protein] + AMP + diphosphate + H(+). In Methanocaldococcus jannaschii (strain ATCC 43067 / DSM 2661 / JAL-1 / JCM 10045 / NBRC 100440) (Methanococcus jannaschii), this protein is Putative biotin ligase.